The following is a 398-amino-acid chain: MGDSEIQYLLEKLKKLEEDYYKLRELYRRLEDEKKFIESERIRYEREVRRLRSEVERLRSPPLLVGVVSDILEDGRVVVKSSTGPKFVVNTSQYINEEELKPGARVALNQQTLAIVNVLPTSKDPMVYGFEVEEKPEVSYEDIGGLDVQIEEIREAVELPLLKPELFAEVGIEPPKGVLLYGPPGTGKTLLAKAVANQTRATFIRVVGSEFVQKYIGEGARLVREVFQLAKEKAPSIIFIDELDAIAARRTNSDTSGDREVQRTMMQLLAELDGFDPRGDVKVIGATNRIDILDPAILRPGRFDRIIEVPLPTFEGRIQIFKIHTRKMKLAEDVDFKELARITEGASGADIKAICTEAGMFAIREERAKVTMLDFTKAIEKVLKKTTPIPDLKGVMFV.

Residues 3-60 (DSEIQYLLEKLKKLEEDYYKLRELYRRLEDEKKFIESERIRYEREVRRLRSEVERLRS) are a coiled coil. Residues 185–190 (GTGKTL) and His324 contribute to the ATP site. Residues 396 to 398 (MFV) are docks into pockets in the proteasome alpha-ring to cause gate opening.

It belongs to the AAA ATPase family. Homohexamer. The hexameric complex has a two-ring architecture resembling a top hat that caps the 20S proteasome core at one or both ends. Upon ATP-binding, the C-terminus of PAN interacts with the alpha-rings of the proteasome core by binding to the intersubunit pockets.

The protein localises to the cytoplasm. ATPase which is responsible for recognizing, binding, unfolding and translocation of substrate proteins into the archaeal 20S proteasome core particle. Is essential for opening the gate of the 20S proteasome via an interaction with its C-terminus, thereby allowing substrate entry and access to the site of proteolysis. Thus, the C-termini of the proteasomal ATPase function like a 'key in a lock' to induce gate opening and therefore regulate proteolysis. Unfolding activity requires energy from ATP hydrolysis, whereas ATP binding alone promotes ATPase-20S proteasome association which triggers gate opening, and supports translocation of unfolded substrates. This is Proteasome-activating nucleotidase from Archaeoglobus fulgidus (strain ATCC 49558 / DSM 4304 / JCM 9628 / NBRC 100126 / VC-16).